The primary structure comprises 145 residues: Putative pre-16S rRNA nuclease (145 aa).

The protein belongs to the YqgF nuclease family.

It is found in the cytoplasm. Could be a nuclease involved in processing of the 5'-end of pre-16S rRNA. This Opitutus terrae (strain DSM 11246 / JCM 15787 / PB90-1) protein is Putative pre-16S rRNA nuclease.